The primary structure comprises 303 residues: Recombination-associated protein RdgC (303 aa).

The protein belongs to the RdgC family.

It is found in the cytoplasm. The protein localises to the nucleoid. Functionally, may be involved in recombination. This chain is Recombination-associated protein RdgC, found in Aeromonas hydrophila subsp. hydrophila (strain ATCC 7966 / DSM 30187 / BCRC 13018 / CCUG 14551 / JCM 1027 / KCTC 2358 / NCIMB 9240 / NCTC 8049).